Consider the following 448-residue polypeptide: Hydroxycinnamoyl-CoA:piscidic acid hydroxycinnamoyltransferase (448 aa).

Active-site proton acceptor residues include H153 and D395.

Belongs to the plant acyltransferase family. As to expression, highly expressed in root and rhizome. Expressed in senescent leaf and callus tissues. Expressed in detached leaf treated for 18 hours with ethephon, methyl jasmonate, salicylic acid or illuminated for 24 hours with UV light. Not expressed in mature leaf. Expressed at low levels in leaves and flowers.

The catalysed reaction is (2R,3S)-piscidate + (E)-4-coumaroyl-CoA = cimicifugate K + CoA. It catalyses the reaction (2R,3S)-piscidate + (E)-caffeoyl-CoA = cimicifugate D + CoA. It carries out the reaction (2R,3S)-piscidate + (E)-sinapoyl-CoA = cimicifugate J + CoA. The enzyme catalyses (2R,3S)-piscidate + (E)-feruloyl-CoA = cimicifugate E + CoA. The protein operates within phenylpropanoid metabolism. Its function is as follows. Catalyzes the formation of cimicifugic acids. Uses hydroxycinnamoyl-CoA thioesters as hydroxycinnamoyl donor substrates. Has a strict specificity for piscidic acid as an acceptor substrate as none of the various other acceptors tested including 4-hydroxyphenyllactic acid, malate, spermidine or tetrahydroxyhexanedioic acid are substrates. Donor substrates include 4-coumaroyl-CoA, caffeoyl-CoA, sinapoyl-CoA and feruloyl-CoA. No activity with cinnamoyl-CoA, isoferuloyl-CoA, 3,4-dimethoxycinnamoyl-CoA or 3,4-dihydroxybenzoyl-CoA as donors. In the reverse reaction with fukinolic acid and CoA as substrates, a formation of fukiic acid is evident. Hence, fukiic acid may also serve as an acceptor substrate. Involved in the biosynthesis of cimicifugic and possibly fukinolic acids. The sequence is that of Hydroxycinnamoyl-CoA:piscidic acid hydroxycinnamoyltransferase from Actaea racemosa (Black cohosh).